The following is a 452-amino-acid chain: Exodeoxyribonuclease 7 large subunit (452 aa).

The protein belongs to the XseA family. As to quaternary structure, heterooligomer composed of large and small subunits.

The protein localises to the cytoplasm. The catalysed reaction is Exonucleolytic cleavage in either 5'- to 3'- or 3'- to 5'-direction to yield nucleoside 5'-phosphates.. Bidirectionally degrades single-stranded DNA into large acid-insoluble oligonucleotides, which are then degraded further into small acid-soluble oligonucleotides. The protein is Exodeoxyribonuclease 7 large subunit of Bacillus cereus (strain B4264).